Consider the following 379-residue polypeptide: AT-rich binding protein (379 aa).

Residues Ile29–His52 form a C2H2-type 1 zinc finger. Residues Glu114–His124 show a composition bias toward basic and acidic residues. Disordered regions lie at residues Glu114 to Lys148 and Pro221 to Leu267. Composition is skewed to low complexity over residues Gln125–Gln143, Ala223–Pro242, and Gln249–Gln262. 2 C2H2-type zinc fingers span residues Tyr312–His336 and Phe342–His365.

The protein resides in the nucleus. Functionally, may be a transcription factor for genes having (A+T) stretches in their promoter and/or enhancer regions. Binds to AT rich DNA. The chain is AT-rich binding protein from Drosophila willistoni (Fruit fly).